Consider the following 474-residue polypeptide: Aspartyl/glutamyl-tRNA(Asn/Gln) amidotransferase subunit B (474 aa).

It belongs to the GatB/GatE family. GatB subfamily. In terms of assembly, heterotrimer of A, B and C subunits.

It catalyses the reaction L-glutamyl-tRNA(Gln) + L-glutamine + ATP + H2O = L-glutaminyl-tRNA(Gln) + L-glutamate + ADP + phosphate + H(+). The catalysed reaction is L-aspartyl-tRNA(Asn) + L-glutamine + ATP + H2O = L-asparaginyl-tRNA(Asn) + L-glutamate + ADP + phosphate + 2 H(+). Allows the formation of correctly charged Asn-tRNA(Asn) or Gln-tRNA(Gln) through the transamidation of misacylated Asp-tRNA(Asn) or Glu-tRNA(Gln) in organisms which lack either or both of asparaginyl-tRNA or glutaminyl-tRNA synthetases. The reaction takes place in the presence of glutamine and ATP through an activated phospho-Asp-tRNA(Asn) or phospho-Glu-tRNA(Gln). This is Aspartyl/glutamyl-tRNA(Asn/Gln) amidotransferase subunit B from Campylobacter curvus (strain 525.92).